A 192-amino-acid polypeptide reads, in one-letter code: MPFDSEIVEVKTRPGEEVATLAGGCFWCTEAVFERMEGVNDVVSGYIGGKIKNPNYKQVCGKMTGHAEAVQIYYDPSKTNFEELLKVFFKTHDPTTLNRQGADGGPQYRSSIFVHNDEQREIAKKTMEKLGEEYRDPIVTLIEPATKFYVAEEYHQDYYRRNPNAGYCQAVVAAKVRKFNRNFGDKIKGSGK.

The active site involves Cys-25.

The protein belongs to the MsrA Met sulfoxide reductase family.

The enzyme catalyses L-methionyl-[protein] + [thioredoxin]-disulfide + H2O = L-methionyl-(S)-S-oxide-[protein] + [thioredoxin]-dithiol. It carries out the reaction [thioredoxin]-disulfide + L-methionine + H2O = L-methionine (S)-S-oxide + [thioredoxin]-dithiol. Its function is as follows. Has an important function as a repair enzyme for proteins that have been inactivated by oxidation. Catalyzes the reversible oxidation-reduction of methionine sulfoxide in proteins to methionine. This chain is Peptide methionine sulfoxide reductase MsrA 1, found in Rhodopirellula baltica (strain DSM 10527 / NCIMB 13988 / SH1).